The chain runs to 518 residues: MADTDEGFGLARTPLEPDSKDRSCDSKPESALGAPSKSPSSPQAAFTQQGMEGIKVFLHERELWLKFHEVGTEMIITKAGRRMFPSYKVKVTGLNPKTKYILLMDIVPADDHRYKFADNKWSVTGKAEPAMPGRLYVHPDSPATGAHWMRQLVSFQKLKLTNNHLDPFGHIILNSMHKYQPRLHIVKADENNGFGSKNTAFCTHVFPETAFIAVTSYQNHKITQLKIENNPFAKGFRGSDDLELHRMSRMQSKEYPVVPRSTVRHKVTSNHSPFSSETRALSTSSNLGSQYQCENGVSGPSQDLLPPPNPYPLAQEHSQIYHCTKRKDEECSSTEHPYKKPYMETSPSEEDTFYRSGYPQQQGLSTSYRTESAQRQACMYASSAPPSEPVPSLEDISCNTWPSMPSYSSCTVTTVQPMDRLPYQHFSAHFTSGPLVPRLAGMANHGSPQLGEGMFQHQTSVAHQPVVRQCGPQTGLQSPGGLQPPEFLYTHGVPRTLSPHQYHSVHGVGMVPEWSENS.

The segment at 1–46 is disordered; the sequence is MADTDEGFGLARTPLEPDSKDRSCDSKPESALGAPSKSPSSPQAAF. Residues 15-28 are compositionally biased toward basic and acidic residues; the sequence is LEPDSKDRSCDSKP. Low complexity predominate over residues 34–45; it reads APSKSPSSPQAA. Residues 58-238 constitute a DNA-binding region (T-box); that stretch reads LHERELWLKF…NNPFAKGFRG (181 aa). 2 disordered regions span residues 254 to 307 and 330 to 352; these read EYPV…LLPP and ECSS…EEDT. Polar residues predominate over residues 269–301; sequence SNHSPFSSETRALSTSSNLGSQYQCENGVSGPS. K339 is subject to N6-acetyllysine.

As to quaternary structure, monomer. Homodimer (via the T-box); binds DNA as homodimer. Interacts (via the T-box) with NKX2-5 (via the homeobox); this complex binds DNA. Interacts with GATA4. Interacts with KAT2A and KAT2B. Post-translationally, acetylation at Lys-339 by KAT2A and KAT2B promotes nuclear retention.

It localises to the nucleus. It is found in the cytoplasm. Functionally, DNA-binding protein that regulates the transcription of several genes and is involved in heart development and limb pattern formation. Binds to the core DNA motif of NPPA promoter. The chain is T-box transcription factor TBX5 (Tbx5) from Mus musculus (Mouse).